The sequence spans 112 residues: Thioredoxin (112 aa).

Positions 2 to 112 constitute a Thioredoxin domain; sequence SEDSATVAVT…ALLRELSDAL (111 aa). Residues Cys35 and Cys38 are joined by a disulfide bond.

Belongs to the thioredoxin family.

Functionally, participates in various redox reactions through the reversible oxidation of its active center dithiol to a disulfide and catalyzes dithiol-disulfide exchange reactions. This Mycolicibacterium smegmatis (Mycobacterium smegmatis) protein is Thioredoxin (trxA).